Consider the following 153-residue polypeptide: Methylglyoxal synthase (153 aa).

The MGS-like domain maps to 3 to 153 (DQVNRPKGVT…SYLSRDVPGN (151 aa)). Substrate is bound by residues His19, Lys23, 45-48 (TGTT), and 65-66 (SG). Residue Asp71 is the Proton donor/acceptor of the active site. His98 serves as a coordination point for substrate.

It belongs to the methylglyoxal synthase family.

It carries out the reaction dihydroxyacetone phosphate = methylglyoxal + phosphate. Its function is as follows. Catalyzes the formation of methylglyoxal from dihydroxyacetone phosphate. This is Methylglyoxal synthase from Hahella chejuensis (strain KCTC 2396).